The primary structure comprises 658 residues: Cysteine-rich receptor-like protein kinase 14 (658 aa).

The signal sequence occupies residues 1 to 22 (MELKNLFPIFWFVLVGFAVVSA). Gnk2-homologous domains lie at 23–125 (QECG…NSSF) and 131–240 (AEPH…LFPF). Residues 23–277 (QECGKTGFFV…ATKKGSITIS (255 aa)) lie on the Extracellular side of the membrane. Asn51, Asn60, Asn102, Asn122, and Asn146 each carry an N-linked (GlcNAc...) asparagine glycan. The helical transmembrane segment at 278-298 (IGIVWAIIIPTVIVVFLVLLA) threads the bilayer. The Cytoplasmic portion of the chain corresponds to 299–658 (LGFVVYRRRK…DVTITDFEPR (360 aa)). Residues 337-614 (FSESNIIGRG…NMMLINNSYV (278 aa)) form the Protein kinase domain. Residues 343–351 (IGRGGFGEV) and Lys364 contribute to the ATP site. The residue at position 409 (Tyr409) is a Phosphotyrosine. The active-site Proton acceptor is the Asp461. Ser465 is subject to Phosphoserine. At Thr501 the chain carries Phosphothreonine. Phosphotyrosine is present on Tyr509.

The protein belongs to the protein kinase superfamily. Ser/Thr protein kinase family. CRK subfamily.

The protein localises to the membrane. It catalyses the reaction L-seryl-[protein] + ATP = O-phospho-L-seryl-[protein] + ADP + H(+). The enzyme catalyses L-threonyl-[protein] + ATP = O-phospho-L-threonyl-[protein] + ADP + H(+). The polypeptide is Cysteine-rich receptor-like protein kinase 14 (CRK14) (Arabidopsis thaliana (Mouse-ear cress)).